Here is a 394-residue protein sequence, read N- to C-terminus: Proliferation-associated protein 2G4 (394 aa).

Ser2 bears the N-acetylserine mark. Residue Ser2 is modified to Phosphoserine. The tract at residues 2–48 (SGEDEQQEQTIAEDLVVTKYKMGGDIANRVLRSLVEASSSGVSVLSL) is necessary for nucleolar localization. An RNA-binding region spans residues 46–54 (LSLCEKGDA). Residue Lys298 forms a Glycyl lysine isopeptide (Lys-Gly) (interchain with G-Cter in SUMO2) linkage. Residues 301-394 (LLQPFNVLYE…ETLEENGAGD (94 aa)) form a necessary for nucleolar localization region. Ser335 is modified (phosphoserine). Positions 358-394 (LQSSASRKTQKKKKKKASKTAENATSGETLEENGAGD) are disordered. Ser361 is modified (phosphoserine; by PKC/PRKCD). The tract at residues 361 to 375 (SASRKTQKKKKKKAS) is interaction with RNA. The segment covering 365-375 (KTQKKKKKKAS) has biased composition (basic residues). Thr366 and Thr386 each carry phosphothreonine.

Belongs to the peptidase M24 family. Isoform 2 interacts with the cytoplasmic domain of non-phosphorylated ERBB3; the interaction requires PKC activity. Interacts with AR. Treatment with HRG leads to dissociation from ERBB3 and increases association with AR. Interacts with nucleolin/NCL. Component of a ribonucleoprotein complex containing at least PA2G4, NCL, TOP1, PABPC2, RPLP0, acetylated histone H1 (HIST1H1A or H1F1), histone H1 2/4, RPL4, RPL8, RPL15, RPL18, RPL18A, RPL21, RPL11, RPL12, RPL28, RPL27, RPLP2 and RPL24. Interacts with HDAC2. Interacts with RB1; the interaction is enhanced upon PA2G4 dephosphorylation. Isoform 1 and isoform 2 interact with RNF20. Isoform 2 interacts with HUWE1. Interacts with AKT1. Interacts with DNAJC21. In terms of processing, phosphorylated on serine and threonine residues. Phosphorylation is enhanced by HRG treatment. Basal phosphorylation is PKC-dependent and HRG-induced phosphorylation is predominantly PKC-independent. Phosphorylation at Ser-361 by PKC/PRKCD regulates its nucleolar localization. Isoform 2 is polyubiquitinated, leading to proteasomal degradation and phosphorylation by PKC/PRKCD enhances polyubiquitination.

Its subcellular location is the cytoplasm. It is found in the nucleus. The protein localises to the nucleolus. May play a role in a ERBB3-regulated signal transduction pathway. Seems be involved in growth regulation. Acts a corepressor of the androgen receptor (AR) and is regulated by the ERBB3 ligand neuregulin-1/heregulin (HRG). Inhibits transcription of some E2F1-regulated promoters, probably by recruiting histone acetylase (HAT) activity. Binds RNA. Associates with 28S, 18S and 5.8S mature rRNAs, several rRNA precursors and probably U3 small nucleolar RNA. May be involved in regulation of intermediate and late steps of rRNA processing. May be involved in ribosome assembly. Mediates cap-independent translation of specific viral IRESs (internal ribosomal entry site). Together with PTBP1 is required for the translation initiation on the foot-and-mouth disease virus (FMDV) IRES. Regulates cell proliferation, differentiation, and survival. Isoform 1 suppresses apoptosis whereas isoform 2 promotes cell differentiation. This is Proliferation-associated protein 2G4 (Pa2g4) from Rattus norvegicus (Rat).